Reading from the N-terminus, the 86-residue chain is MGRTVKVGSAGRFGPRYGLKIRRRVAAVEARMKQKHVCPVCGRKAVRRISTGIWQCQKCGATFAGGAYLPTTPAGKVAKRVVASKA.

Residues 38–59 (CPVCGRKAVRRISTGIWQCQKC) form a C4-type zinc finger.

The protein belongs to the eukaryotic ribosomal protein eL43 family. Zn(2+) serves as cofactor.

This Thermococcus gammatolerans (strain DSM 15229 / JCM 11827 / EJ3) protein is Large ribosomal subunit protein eL43.